The following is a 236-amino-acid chain: MPNRRRCKLSTAISTVATLAIASPCAYFLVYEPTASAKPAAKHYEFKQAASIADLPGEVLDAISQGLSQFGINLPPVPSLTGTDDPGNGLRTPGLTSPDLTNQELGTPVLTAPGTGLTPPVTGSPICTAPDLNLGGTCPSEVPITTPISLDPGTDGTYPILGDPSTLGGTSPISTSSGELVNDLLKVANQLGASQVMDLIKGVVMPAVMQGVQNGNVAGDLSGSVTPAAISLIPVT.

The N-terminal stretch at 1 to 22 (MPNRRRCKLSTAISTVATLAIA) is a signal peptide. The tract at residues 76–105 (PVPSLTGTDDPGNGLRTPGLTSPDLTNQEL) is disordered. Positions 94–105 (GLTSPDLTNQEL) are enriched in polar residues.

The protein to M.tuberculosis ERP.

This is 28 kDa antigen from Mycobacterium leprae (strain TN).